Here is a 216-residue protein sequence, read N- to C-terminus: ATP phosphoribosyltransferase (216 aa).

The protein belongs to the ATP phosphoribosyltransferase family. Short subfamily. As to quaternary structure, heteromultimer composed of HisG and HisZ subunits.

Its subcellular location is the cytoplasm. The catalysed reaction is 1-(5-phospho-beta-D-ribosyl)-ATP + diphosphate = 5-phospho-alpha-D-ribose 1-diphosphate + ATP. Its pathway is amino-acid biosynthesis; L-histidine biosynthesis; L-histidine from 5-phospho-alpha-D-ribose 1-diphosphate: step 1/9. In terms of biological role, catalyzes the condensation of ATP and 5-phosphoribose 1-diphosphate to form N'-(5'-phosphoribosyl)-ATP (PR-ATP). Has a crucial role in the pathway because the rate of histidine biosynthesis seems to be controlled primarily by regulation of HisG enzymatic activity. This Nitrosomonas eutropha (strain DSM 101675 / C91 / Nm57) protein is ATP phosphoribosyltransferase.